We begin with the raw amino-acid sequence, 20 residues long: Pregnancy-associated glycoprotein 73B (20 aa).

This sequence belongs to the peptidase A1 family. Post-translationally, N-glycosylated. As to expression, expressed in chorionic epithelium (trophectoderm).

It is found in the secreted. It localises to the extracellular space. This Bubalus bubalis (Domestic water buffalo) protein is Pregnancy-associated glycoprotein 73B.